Consider the following 98-residue polypeptide: Secreted LysM effector Mgx1LysM (98 aa).

The N-terminal stretch at 1-18 (MKVTTIIAALLSVAVVDA) is a signal peptide. Cystine bridges form between Cys-31-Cys-89 and Cys-62-Cys-97. The LysM domain occupies 37 to 85 (IPYVVKKGDTLTHIAHDIYKRKVGICDLAYTNHIGKNPNLIYAGQTLLI). Gly-44, Thr-48, Asn-75, and Ile-77 together coordinate chitin.

The protein belongs to the secreted LysM effector family. In terms of assembly, forms homodimers in a chitin-independent manner through interactions at the N-termini of Mgx1LysM monomers. Homodimers are further polymerized in a chitin-dependent manner.

Its subcellular location is the secreted. The protein localises to the cell wall. Its function is as follows. Secreted effector that enables the plant pathogenic fungus to manipulate host defenses for successful infection. Binds chitin and suppresses the chitin-induced reactive oxygen species (ROS) burst. Chitin-induced polymerization of homodimers forms a contiguous Mg1LysM highly oligomeric super-complexe that is anchored to the chitin in the fungal cell wall to prevent hydrolysis by host chitinases. The polypeptide is Secreted LysM effector Mgx1LysM (Zymoseptoria tritici (strain ST99CH_3D7)).